A 465-amino-acid polypeptide reads, in one-letter code: 5-cytosine rRNA methyltransferase nsun-4 (465 aa).

Residues 1-6 (MSCLRQ) constitute a mitochondrion transit peptide. Residues 106 to 130 (QAIETKRKSVEEKANRETQKVKHEI) show a composition bias toward basic and acidic residues. Residues 106-145 (QAIETKRKSVEEKANRETQKVKHEISNPSTSTNTEDSEPD) form a disordered region. Residues 260–266 (CAAPGGK), Asp-283, Asp-316, and Asp-335 contribute to the S-adenosyl-L-methionine site. Cys-390 acts as the Nucleophile in catalysis.

Belongs to the class I-like SAM-binding methyltransferase superfamily. RsmB/NOP family.

The protein resides in the mitochondrion. The catalysed reaction is a cytidine in rRNA + S-adenosyl-L-methionine = a 5-methylcytidine in rRNA + S-adenosyl-L-homocysteine + H(+). The enzyme catalyses a cytidine in tRNA + S-adenosyl-L-methionine = a 5-methylcytidine in tRNA + S-adenosyl-L-homocysteine + H(+). In terms of biological role, mitochondrial methyltransferase which methylates cytosine to 5-methylcytosine (m5C) in rRNAs and tRNAs at multiple sites. May play a role in the translation of leucine and proline codons. The chain is 5-cytosine rRNA methyltransferase nsun-4 from Caenorhabditis elegans.